A 374-amino-acid chain; its full sequence is Chaperone protein DnaJ (374 aa).

The 66-residue stretch at 5–70 folds into the J domain; that stretch reads DFYEILGLGK…QKRDAYDRYG (66 aa). Residues 28–47 form a disordered region; sequence LAMKHHPDRNPDSKGAEDKF. Over residues 35–47 the composition is skewed to basic and acidic residues; that stretch reads DRNPDSKGAEDKF. Residues 134–212 form a CR-type zinc finger; the sequence is GYDTTIRVPS…CSGAGKIKRN (79 aa). Positions 147, 150, 164, 167, 186, 189, 200, and 203 each coordinate Zn(2+). 4 CXXCXGXG motif repeats span residues 147 to 154, 164 to 171, 186 to 193, and 200 to 207; these read CETCDGSG, CTTCGGHG, CPKCHGSG, and CTACSGAG.

It belongs to the DnaJ family. Homodimer. The cofactor is Zn(2+).

It localises to the cytoplasm. Participates actively in the response to hyperosmotic and heat shock by preventing the aggregation of stress-denatured proteins and by disaggregating proteins, also in an autonomous, DnaK-independent fashion. Unfolded proteins bind initially to DnaJ; upon interaction with the DnaJ-bound protein, DnaK hydrolyzes its bound ATP, resulting in the formation of a stable complex. GrpE releases ADP from DnaK; ATP binding to DnaK triggers the release of the substrate protein, thus completing the reaction cycle. Several rounds of ATP-dependent interactions between DnaJ, DnaK and GrpE are required for fully efficient folding. Also involved, together with DnaK and GrpE, in the DNA replication of plasmids through activation of initiation proteins. The polypeptide is Chaperone protein DnaJ (Herminiimonas arsenicoxydans).